The sequence spans 705 residues: Cell cycle serine/threonine-protein kinase CDC5/MSD2 (705 aa).

Thr23 carries the phosphothreonine modification. The span at 41–53 shows a compositional bias: basic and acidic residues; it reads QTKRLDPNNDHHH. The tract at residues 41–63 is disordered; it reads QTKRLDPNNDHHHQPAQKKKREK. Residues 82 to 337 enclose the Protein kinase domain; sequence YHRGHFLGEG…LTEIMDYVWF (256 aa). Residues 88–96 and Lys110 each bind ATP; that span reads LGEGGFARC. Asp204 (proton acceptor) is an active-site residue. At Ser419 the chain carries Phosphoserine. Residues 513 to 595 form the POLO box 1 domain; sequence IVTKWVDYSN…VDFFAKYMKA (83 aa). Glu553, His569, His609, and Asp612 together coordinate Zn(2+). Residues 614–700 form the POLO box 2 domain; it reads FLRRYTRYKP…IKEGLKQKST (87 aa).

Belongs to the protein kinase superfamily. Ser/Thr protein kinase family. CDC5/Polo subfamily. In terms of assembly, interacts with CDC48; the interaction is likely to result in CDC5 degradation. Interacts with CSA1.

Its subcellular location is the cytoplasm. The protein resides in the cytoskeleton. The protein localises to the microtubule organizing center. It is found in the spindle pole body. The catalysed reaction is L-seryl-[protein] + ATP = O-phospho-L-seryl-[protein] + ADP + H(+). The enzyme catalyses L-threonyl-[protein] + ATP = O-phospho-L-threonyl-[protein] + ADP + H(+). Protein kinase required for the cell cycle where it is involved in mitotic exit. A component of the fear (CDC14 early anaphase release) network which promotes CDC14 release from the nucleolus during early anaphase. Phosphorylates SCC1/MCD1 and NET1. This chain is Cell cycle serine/threonine-protein kinase CDC5/MSD2 (CDC5), found in Saccharomyces cerevisiae (strain ATCC 204508 / S288c) (Baker's yeast).